A 566-amino-acid chain; its full sequence is Arginine--tRNA ligase (566 aa).

A 'HIGH' region motif is present at residues 123 to 133 (PNIAKPFHIGH).

This sequence belongs to the class-I aminoacyl-tRNA synthetase family. In terms of assembly, monomer.

Its subcellular location is the cytoplasm. It catalyses the reaction tRNA(Arg) + L-arginine + ATP = L-arginyl-tRNA(Arg) + AMP + diphosphate. This Halothermothrix orenii (strain H 168 / OCM 544 / DSM 9562) protein is Arginine--tRNA ligase.